The following is a 408-amino-acid chain: Myb/SANT-like DNA-binding domain-containing protein 4 (408 aa).

Residues 4-77 form the Myb-like domain; the sequence is LKRKRKSNFS…EVKRRYLDWR (74 aa). The stretch at 236–367 forms a coiled coil; the sequence is HLLVTLEKQK…IEKERLQDAL (132 aa).

The polypeptide is Myb/SANT-like DNA-binding domain-containing protein 4 (msantd4) (Xenopus tropicalis (Western clawed frog)).